Reading from the N-terminus, the 142-residue chain is Baculoviral IAP repeat-containing protein 5 (142 aa).

The BIR repeat unit spans residues 18–88; the sequence is RVSTFKNWPF…KHSSGCAFLS (71 aa). A Phosphoserine; by AURKC modification is found at Ser-20. Lys-23 is subject to N6-acetyllysine. Thr-34 carries the phosphothreonine; by CDK1 and CDK15 modification. Phosphothreonine is present on Thr-48. The Zn(2+) site is built by Cys-57, Cys-60, His-77, and Cys-84. An N6-acetyllysine mark is found at Lys-90, Lys-110, Lys-112, and Lys-115. Thr-117 bears the Phosphothreonine; by AURKB mark. Lys-129 bears the N6-acetyllysine mark.

The protein belongs to the IAP family. As to quaternary structure, monomer or homodimer. Exists as a homodimer in the apo state and as a monomer in the CPC-bound state. The monomer protects cells against apoptosis more efficiently than the dimer. Only the dimeric form is capable of enhancing tubulin stability in cells. When phosphorylated, interacts with LAMTOR5/HBXIP; the resulting complex binds pro-CASP9, as well as active CASP9, but much less efficiently. Component of the chromosomal passenger complex (CPC) composed of at least BIRC5/survivin, CDCA8/borealin, INCENP, AURKB or AURKC; in the complex forms a triple-helix bundle-based subcomplex with INCENP and CDCA8. Interacts with JTB. Interacts (via BIR domain) with histone H3 phosphorylated at 'Thr-3' (H3pT3). Interacts with EVI5. Interacts with GTP-bound RAN in both the S and M phases of the cell cycle. Interacts with USP9X. Interacts with tubulin. Interacts with BIRC2/c-IAP1. The acetylated form at Lys-129 interacts with STAT3. The monomeric form deacetylated at Lys-129 interacts with XPO1/CRM1. The monomeric form interacts with XIAP/BIRC4. Both the dimeric and monomeric form can interact with DIABLO/SMAC. Interacts with BIRC6/bruce. Interacts with FBXL7; this interaction facilitates the polyubiquitination and subsequent proteasomal degradation of BIRC5 by the SCF(FBXL7) E3 ubiquitin-protein ligase complex. Post-translationally, ubiquitinated by the Cul9-RING ubiquitin-protein ligase complex, leading to its degradation. Ubiquitination is required for centrosomal targeting. Deubiquitinated by USP35 or USP38; leading to stabilization. Acetylation at Lys-129 results in its homodimerization, while deacetylation promotes the formation of monomers which heterodimerize with XPO1/CRM1 which facilitates its nuclear export. The acetylated form represses STAT3 transactivation. The dynamic equilibrium between its acetylation and deacetylation at Lys-129 determines its interaction with XPO1/CRM1, its subsequent subcellular localization, and its ability to inhibit STAT3 transactivation. In terms of processing, in vitro phosphorylation at Thr-117 by AURKB prevents interaction with INCENP and localization to mitotic chromosomes. Phosphorylation at Thr-48 by CK2 is critical for its mitotic and anti-apoptotic activities. Phosphorylation at Thr-34 by CDK15 is critical for its anti-apoptotic activity. Phosphorylation at Ser-20 by AURKC is critical for regulation of proper chromosome alignment and segregation, and possibly cytokinesis.

Its subcellular location is the cytoplasm. The protein resides in the nucleus. It is found in the chromosome. It localises to the centromere. The protein localises to the cytoskeleton. Its subcellular location is the spindle. The protein resides in the kinetochore. It is found in the midbody. Its function is as follows. Multitasking protein that has dual roles in promoting cell proliferation and preventing apoptosis. Component of a chromosome passage protein complex (CPC) which is essential for chromosome alignment and segregation during mitosis and cytokinesis. Acts as an important regulator of the localization of this complex; directs CPC movement to different locations from the inner centromere during prometaphase to midbody during cytokinesis and participates in the organization of the center spindle by associating with polymerized microtubules. Involved in the recruitment of CPC to centromeres during early mitosis via association with histone H3 phosphorylated at 'Thr-3' (H3pT3) during mitosis. The complex with RAN plays a role in mitotic spindle formation by serving as a physical scaffold to help deliver the RAN effector molecule TPX2 to microtubules. May counteract a default induction of apoptosis in G2/M phase. The acetylated form represses STAT3 transactivation of target gene promoters. May play a role in neoplasia. Inhibitor of CASP3 and CASP7. Essential for the maintenance of mitochondrial integrity and function. In Canis lupus familiaris (Dog), this protein is Baculoviral IAP repeat-containing protein 5 (BIRC5).